The sequence spans 147 residues: uncharacterized protein (147 aa).

In terms of domain architecture, N-acetyltransferase spans 1-147; the sequence is MEIRRADKDD…RPESGGSGSE (147 aa).

The protein belongs to the acetyltransferase family.

This is an uncharacterized protein from Archaeoglobus fulgidus (strain ATCC 49558 / DSM 4304 / JCM 9628 / NBRC 100126 / VC-16).